Reading from the N-terminus, the 473-residue chain is Ribulose bisphosphate carboxylase large chain (473 aa).

Residues N116 and T166 each contribute to the substrate site. K168 (proton acceptor) is an active-site residue. K170 contacts substrate. Residues K194, D196, and E197 each coordinate Mg(2+). K194 is modified (N6-carboxylysine). H287 acts as the Proton acceptor in catalysis. R288, H320, and S372 together coordinate substrate.

The protein belongs to the RuBisCO large chain family. Type I subfamily. As to quaternary structure, heterohexadecamer of 8 large chains and 8 small chains. Requires Mg(2+) as cofactor.

The catalysed reaction is 2 (2R)-3-phosphoglycerate + 2 H(+) = D-ribulose 1,5-bisphosphate + CO2 + H2O. It catalyses the reaction D-ribulose 1,5-bisphosphate + O2 = 2-phosphoglycolate + (2R)-3-phosphoglycerate + 2 H(+). Its function is as follows. RuBisCO catalyzes two reactions: the carboxylation of D-ribulose 1,5-bisphosphate, the primary event in carbon dioxide fixation, as well as the oxidative fragmentation of the pentose substrate. Both reactions occur simultaneously and in competition at the same active site. The chain is Ribulose bisphosphate carboxylase large chain from Nitrosomonas eutropha (strain DSM 101675 / C91 / Nm57).